The chain runs to 441 residues: Trigger factor (441 aa).

One can recognise a PPIase FKBP-type domain in the interval 161 to 246 (GDKVTIDFLG…VHEVLGEKLP (86 aa)).

Belongs to the FKBP-type PPIase family. Tig subfamily.

The protein localises to the cytoplasm. It carries out the reaction [protein]-peptidylproline (omega=180) = [protein]-peptidylproline (omega=0). In terms of biological role, involved in protein export. Acts as a chaperone by maintaining the newly synthesized protein in an open conformation. Functions as a peptidyl-prolyl cis-trans isomerase. The chain is Trigger factor from Teredinibacter turnerae (strain ATCC 39867 / T7901).